The following is a 708-amino-acid chain: Vertnin (708 aa).

2 disordered regions span residues 473–499 and 561–636; these read PWKGEGGEGAGKATAGGPPAPHEFLPP and APAL…PVAE. A compositionally biased stretch (basic and acidic residues) spans 568–582; that stretch reads GLREAKEKQEKEAGR.

Belongs to the vertnin family.

This Ailuropoda melanoleuca (Giant panda) protein is Vertnin (VRTN).